Here is a 397-residue protein sequence, read N- to C-terminus: Phosphoglycerate kinase (397 aa).

Substrate-binding positions include 21–23 (DVN), R36, 59–62 (HFGR), R119, and R152. ATP-binding positions include K202, E324, and 354-357 (GGDT).

Belongs to the phosphoglycerate kinase family. As to quaternary structure, monomer.

The protein localises to the cytoplasm. It catalyses the reaction (2R)-3-phosphoglycerate + ATP = (2R)-3-phospho-glyceroyl phosphate + ADP. Its pathway is carbohydrate degradation; glycolysis; pyruvate from D-glyceraldehyde 3-phosphate: step 2/5. The sequence is that of Phosphoglycerate kinase from Cereibacter sphaeroides (strain ATCC 17029 / ATH 2.4.9) (Rhodobacter sphaeroides).